The sequence spans 397 residues: Argininosuccinate synthase (397 aa).

9-17 (AYSGGLDTS) lines the ATP pocket. Tyr-85 provides a ligand contact to L-citrulline. Gly-115 serves as a coordination point for ATP. L-aspartate contacts are provided by Thr-117, Asn-121, and Asp-122. Asn-121 provides a ligand contact to L-citrulline. The L-citrulline site is built by Arg-125, Ser-173, Glu-258, and Tyr-270.

It belongs to the argininosuccinate synthase family. Type 1 subfamily. In terms of assembly, homotetramer.

It is found in the cytoplasm. It carries out the reaction L-citrulline + L-aspartate + ATP = 2-(N(omega)-L-arginino)succinate + AMP + diphosphate + H(+). The protein operates within amino-acid biosynthesis; L-arginine biosynthesis; L-arginine from L-ornithine and carbamoyl phosphate: step 2/3. The protein is Argininosuccinate synthase of Streptococcus suis (strain 05ZYH33).